The chain runs to 239 residues: 7-cyano-7-deazaguanine synthase (239 aa).

13–23 (LSGGLDSMVTA) lines the ATP pocket. Residues cysteine 193, cysteine 203, cysteine 206, and cysteine 209 each contribute to the Zn(2+) site.

This sequence belongs to the QueC family. The cofactor is Zn(2+).

The catalysed reaction is 7-carboxy-7-deazaguanine + NH4(+) + ATP = 7-cyano-7-deazaguanine + ADP + phosphate + H2O + H(+). Its pathway is purine metabolism; 7-cyano-7-deazaguanine biosynthesis. In terms of biological role, catalyzes the ATP-dependent conversion of 7-carboxy-7-deazaguanine (CDG) to 7-cyano-7-deazaguanine (preQ(0)). This is 7-cyano-7-deazaguanine synthase from Erythrobacter litoralis (strain HTCC2594).